The following is a 729-amino-acid chain: DNA topoisomerase 3 (729 aa).

In terms of domain architecture, Toprim spans 3–136 (KSVVIAEKPS…IKRLWISSVT (134 aa)). Residues Glu9 and Asp105 each contribute to the Mg(2+) site. Residues 153 to 594 (YDNLYASAVA…EMKNYTKEIV (442 aa)) form the Topo IA-type catalytic domain. Residues 187-192 (NCGRVQ) are interaction with DNA. The active-site O-(5'-phospho-DNA)-tyrosine intermediate is Tyr310. Basic and acidic residues predominate over residues 686-713 (ERRKKESGNKADKRDVQKYMKQQKKEEE). The disordered stretch occupies residues 686-718 (ERRKKESGNKADKRDVQKYMKQQKKEEEPLNNP).

Belongs to the type IA topoisomerase family. Mg(2+) is required as a cofactor.

The catalysed reaction is ATP-independent breakage of single-stranded DNA, followed by passage and rejoining.. In terms of biological role, releases the supercoiling and torsional tension of DNA, which is introduced during the DNA replication and transcription, by transiently cleaving and rejoining one strand of the DNA duplex. Introduces a single-strand break via transesterification at a target site in duplex DNA. The scissile phosphodiester is attacked by the catalytic tyrosine of the enzyme, resulting in the formation of a DNA-(5'-phosphotyrosyl)-enzyme intermediate and the expulsion of a 3'-OH DNA strand. The free DNA strand then undergoes passage around the unbroken strand, thus removing DNA supercoils. Finally, in the religation step, the DNA 3'-OH attacks the covalent intermediate to expel the active-site tyrosine and restore the DNA phosphodiester backbone. The chain is DNA topoisomerase 3 from Bacillus cereus (strain ATCC 10987 / NRS 248).